The following is a 426-amino-acid chain: Glucan endo-1,3-beta-glucosidase 11 (426 aa).

The signal sequence occupies residues 1 to 30 (MELTSFHRSSLLFLISLTLIILPTTTTSIG). Residue Asn112 is glycosylated (N-linked (GlcNAc...) asparagine). Glu121 functions as the Proton donor in the catalytic mechanism. The N-linked (GlcNAc...) asparagine glycan is linked to Asn126. The active-site Nucleophile is Glu266. Gly residues predominate over residues 360–372 (GGGTGGGNSSSGG). The tract at residues 360–389 (GGGTGGGNSSSGGGRDKSPVFPVSPVAPDS) is disordered. N-linked (GlcNAc...) asparagine glycosylation is present at Asn367. Residue Ser398 is the site of GPI-anchor amidated serine attachment. A propeptide spans 399–426 (ASPVTGKRKGKGAILSLVVSMLLARHLL) (removed in mature form).

Belongs to the glycosyl hydrolase 17 family.

Its subcellular location is the secreted. The protein resides in the cell wall. The protein localises to the cell membrane. It carries out the reaction Hydrolysis of (1-&gt;3)-beta-D-glucosidic linkages in (1-&gt;3)-beta-D-glucans.. The protein is Glucan endo-1,3-beta-glucosidase 11 of Arabidopsis thaliana (Mouse-ear cress).